Here is a 137-residue protein sequence, read N- to C-terminus: Large ribosomal subunit protein uL16 (137 aa).

This sequence belongs to the universal ribosomal protein uL16 family. As to quaternary structure, part of the 50S ribosomal subunit.

Functionally, binds 23S rRNA and is also seen to make contacts with the A and possibly P site tRNAs. The chain is Large ribosomal subunit protein uL16 from Streptococcus equi subsp. zooepidemicus (strain H70).